We begin with the raw amino-acid sequence, 270 residues long: uncharacterized protein (270 aa).

Its subcellular location is the cytoplasm. This is an uncharacterized protein from Schizosaccharomyces pombe (strain 972 / ATCC 24843) (Fission yeast).